The chain runs to 548 residues: Folylpolyglutamate synthase (548 aa).

ATP is bound at residue 130–133 (GKGS). Mg(2+) contacts are provided by Ser-157, Glu-234, and His-262. ATP-binding residues include Arg-382 and Asp-396.

Belongs to the folylpolyglutamate synthase family. It depends on a monovalent cation as a cofactor.

Its subcellular location is the mitochondrion inner membrane. It is found in the mitochondrion matrix. The protein resides in the cytoplasm. It carries out the reaction (6S)-5,6,7,8-tetrahydrofolyl-(gamma-L-Glu)(n) + L-glutamate + ATP = (6S)-5,6,7,8-tetrahydrofolyl-(gamma-L-Glu)(n+1) + ADP + phosphate + H(+). Its pathway is cofactor biosynthesis; tetrahydrofolylpolyglutamate biosynthesis. In terms of biological role, catalyzes conversion of folates to polyglutamate derivatives allowing concentration of folate compounds in the cell and the intracellular retention of these cofactors, which are important substrates for most of the folate-dependent enzymes that are involved in one-carbon transfer reactions involved in purine, pyrimidine and amino acid synthesis. Required for methionine synthesis and maintenance of intact mitochondrial DNA. Involved in telomere maintenance. The protein is Folylpolyglutamate synthase of Saccharomyces cerevisiae (strain FostersB) (Baker's yeast).